A 322-amino-acid chain; its full sequence is Cytochrome c biogenesis protein CcsA (322 aa).

7 helical membrane-spanning segments follow: residues 9-29 (IFTHISFSIVSIVIIIHLITL), 44-64 (GMIVTFLCLTGLLITRWIYSG), 71-91 (LYESLIFLSWSFSLIHIVPYF), 143-163 (MILSYAALLCGSLLSVALLVI), 226-246 (VISLGFIFLTIGILSGAVWAN), 255-275 (WDPKETWAFITWIVFAIYLHI), and 287-307 (AIVATLGFLIIWICYFGVNLL).

The protein belongs to the CcmF/CycK/Ccl1/NrfE/CcsA family. As to quaternary structure, may interact with Ccs1.

It is found in the plastid. Its subcellular location is the chloroplast thylakoid membrane. Functionally, required during biogenesis of c-type cytochromes (cytochrome c6 and cytochrome f) at the step of heme attachment. In Lactuca sativa (Garden lettuce), this protein is Cytochrome c biogenesis protein CcsA.